The chain runs to 165 residues: MASTIAAATKVSRKMFRELHGVVVTSGLIDKTVKVRVGGQKFNKFLQKHFDDPKQYLVHDPNNSLRAGDVVAIMPGFITSKSKRHVVKHIIAPAGTPIEERPPIPSLDELWDAKDAAKAAKKERKVLREKMQAAEEAIELAERMARHAVREIAMREKIISLQKVD.

Belongs to the universal ribosomal protein uS17 family. Component of the mitochondrial small ribosomal subunit (mt-SSU). Mature N.crassa 74S mitochondrial ribosomes consist of a small (37S) and a large (54S) subunit. The 37S small subunit contains a 16S ribosomal RNA (16S mt-rRNA) and 32 different proteins. The 54S large subunit contains a 23S rRNA (23S mt-rRNA) and 42 different proteins. uS17m interacts with the F(1)-ATPase inhibitor IF(1) dimer.

The protein localises to the mitochondrion. In terms of biological role, component of the mitochondrial ribosome (mitoribosome), a dedicated translation machinery responsible for the synthesis of mitochondrial genome-encoded proteins, including at least some of the essential transmembrane subunits of the mitochondrial respiratory chain. The mitoribosomes are attached to the mitochondrial inner membrane and translation products are cotranslationally integrated into the membrane. The sequence is that of Small ribosomal subunit protein uS17m (mrps17) from Neurospora crassa (strain ATCC 24698 / 74-OR23-1A / CBS 708.71 / DSM 1257 / FGSC 987).